The following is a 333-amino-acid chain: Methionyl-tRNA formyltransferase (333 aa).

Residue 106 to 109 (SLLP) participates in (6S)-5,6,7,8-tetrahydrofolate binding.

The protein belongs to the Fmt family.

The catalysed reaction is L-methionyl-tRNA(fMet) + (6R)-10-formyltetrahydrofolate = N-formyl-L-methionyl-tRNA(fMet) + (6S)-5,6,7,8-tetrahydrofolate + H(+). Attaches a formyl group to the free amino group of methionyl-tRNA(fMet). The formyl group appears to play a dual role in the initiator identity of N-formylmethionyl-tRNA by promoting its recognition by IF2 and preventing the misappropriation of this tRNA by the elongation apparatus. This is Methionyl-tRNA formyltransferase from Elusimicrobium minutum (strain Pei191).